The sequence spans 71 residues: DNA-directed RNA polymerase subunit epsilon (71 aa).

It belongs to the RNA polymerase subunit epsilon family. As to quaternary structure, RNAP is composed of a core of 2 alpha, a beta and a beta' subunit. The core is associated with a delta subunit, and at least one of epsilon or omega. When a sigma factor is associated with the core the holoenzyme is formed, which can initiate transcription.

The catalysed reaction is RNA(n) + a ribonucleoside 5'-triphosphate = RNA(n+1) + diphosphate. Its function is as follows. A non-essential component of RNA polymerase (RNAP). In Geobacillus kaustophilus (strain HTA426), this protein is DNA-directed RNA polymerase subunit epsilon.